Consider the following 1067-residue polypeptide: Sal-like protein 4 (1067 aa).

The interval 1 to 62 (MSRRKQAKPQ…SEDSIPVKRP (62 aa)) is disordered. The span at 15-42 (EEGQGEQPQQLPSPDLAEALAAEEPGAP) shows a compositional bias: low complexity. At serine 53 the chain carries Phosphoserine. The segment at 68–90 (HICNKCCAEFFSLSEFMEHKKSC) adopts a C2H2-type 1; atypical zinc-finger fold. Positions 115–140 (ALSHQLGSPSNKDSLQENGSSSGDLK) are disordered. Positions 119-137 (QLGSPSNKDSLQENGSSSG) are enriched in polar residues. Lysine 151 participates in a covalent cross-link: Glycyl lysine isopeptide (Lys-Gly) (interchain with G-Cter in SUMO1); alternate. A Glycyl lysine isopeptide (Lys-Gly) (interchain with G-Cter in SUMO2); alternate cross-link involves residue lysine 151. Glycyl lysine isopeptide (Lys-Gly) (interchain with G-Cter in SUMO2) cross-links involve residues lysine 170, lysine 185, and lysine 291. The residue at position 308 (serine 308) is a Phosphoserine. Lysine 317 participates in a covalent cross-link: Glycyl lysine isopeptide (Lys-Gly) (interchain with G-Cter in SUMO1); alternate. A Glycyl lysine isopeptide (Lys-Gly) (interchain with G-Cter in SUMO2); alternate cross-link involves residue lysine 317. Lysine 377 participates in a covalent cross-link: Glycyl lysine isopeptide (Lys-Gly) (interchain with G-Cter in SUMO2). Lysine 379 participates in a covalent cross-link: Glycyl lysine isopeptide (Lys-Gly) (interchain with G-Cter in SUMO1); alternate. Lysine 379 is covalently cross-linked (Glycyl lysine isopeptide (Lys-Gly) (interchain with G-Cter in SUMO2); alternate). C2H2-type zinc fingers lie at residues 387–409 (HKCR…LRSH) and 415–437 (YVCP…LQRH). Residue lysine 441 forms a Glycyl lysine isopeptide (Lys-Gly) (interchain with G-Cter in SUMO2) linkage. Positions 471–521 (DESSLSVDAEPVPVTGTPSLGLPQKLTSGPNSRDLMGGSLPNDMQPGPSPE) are disordered. Lysine 557 participates in a covalent cross-link: Glycyl lysine isopeptide (Lys-Gly) (interchain with G-Cter in SUMO2). C2H2-type zinc fingers lie at residues 573–595 (NECL…YRTH) and 601–623 (FQCK…LGVH). Residues lysine 604 and lysine 630 each participate in a glycyl lysine isopeptide (Lys-Gly) (interchain with G-Cter in SUMO2) cross-link. The segment at 633–655 (HSCPICQKKFTNAVMLQQHIRMH) adopts a C2H2-type 6 zinc-finger fold. Disordered stretches follow at residues 682–716 (ENGS…STVS) and 752–835 (RQSS…SLPP). The span at 693–704 (DAAEGMEAEEVC) shows a compositional bias: acidic residues. 2 stretches are compositionally biased toward polar residues: residues 707–716 (DVPSGPSTVS) and 752–761 (RQSSRENSSL). Phosphoserine occurs at positions 785 and 798. Residues 798–809 (SPANSQAGSVKS) show a composition bias toward polar residues. The segment covering 810 to 829 (RSPEGHKAEGVESCRVDTEG) has biased composition (basic and acidic residues). Lysine 846 participates in a covalent cross-link: Glycyl lysine isopeptide (Lys-Gly) (interchain with G-Cter in SUMO1); alternate. Lysine 846 participates in a covalent cross-link: Glycyl lysine isopeptide (Lys-Gly) (interchain with G-Cter in SUMO2); alternate. The segment at 880 to 902 (HCCTRCGKNFSSASALQIHERTH) adopts a C2H2-type 7 zinc-finger fold. Residue lysine 906 forms a Glycyl lysine isopeptide (Lys-Gly) (interchain with G-Cter in SUMO2) linkage. Residues 908-930 (FVCNICGRAFTTKGNLKVHYMTH) form a C2H2-type 8 zinc finger. Residues lysine 942 and lysine 957 each participate in a glycyl lysine isopeptide (Lys-Gly) (interchain with G-Cter in SUMO2) cross-link. Phosphoserine is present on serine 1029.

This sequence belongs to the sal C2H2-type zinc-finger protein family. As to quaternary structure, interacts with POU5F1/OCT4. Interacts with NANOG. Interacts with BEND3. Interacts with NSD2 (via PHD-type zinc fingers 1, 2 and 3). Interacts with NRBP1. In terms of processing, sumoylation with both SUMO1 and SUMO2 regulates the stability, subcellular localization, transcriptional activity, and may reduce interaction with POU5F1/OCT4.

It localises to the cytoplasm. Its subcellular location is the nucleus. Functionally, transcription factor with a key role in the maintenance and self-renewal of embryonic and hematopoietic stem cells. The chain is Sal-like protein 4 (Sall4) from Mus musculus (Mouse).